Here is a 917-residue protein sequence, read N- to C-terminus: Smoothelin (917 aa).

The residue at position 2 (Ala2) is an N-acetylalanine. Positions 24–89 (LAERRRIRSA…ARLAGQLESM (66 aa)) form a coiled coil. Residues 157-456 (EVPEREEQEQ…AVGTAEPGGS (300 aa)) are disordered. A compositionally biased stretch (polar residues) spans 177–188 (PEGTSQDVTTVT). Composition is skewed to low complexity over residues 193 to 210 (APPGSTSSSPASPSSSPT) and 220 to 232 (PAEAQCLTAEVPG). Pro residues predominate over residues 233–243 (SPEPPPSPPKT). A compositionally biased stretch (low complexity) spans 244–258 (TSPEPQESPTLPSTE). Residues 298–326 (RSLSVLSPRQPAQNRESTPLASGPSSFQR) are compositionally biased toward polar residues. Ser299, Ser301, and Ser304 each carry phosphoserine. Residues 329–338 (SVRDRVHKFT) show a composition bias toward basic and acidic residues. At Ser341 the chain carries Phosphoserine. A Phosphothreonine modification is found at Thr351. Residue Ser357 is modified to Phosphoserine. 2 positions are modified to phosphothreonine: Thr360 and Thr373. A compositionally biased stretch (low complexity) spans 363-392 (RLLGPSLTSTTPASSSSGSSSRGPSDTSSR). Ser503, Ser514, Ser523, and Ser576 each carry phosphoserine. Disordered regions lie at residues 560–580 (ANGAEQTRVNKAPEGRSPLSA) and 617–767 (QRKR…RKAM). A coiled-coil region spans residues 603-630 (EERKLIRAALRELRQRKRDQRDKERERR). Basic and acidic residues predominate over residues 617-640 (QRKRDQRDKERERRLQEARGRPGE). The span at 676-689 (NDGTRTARTTTVES) shows a compositional bias: polar residues. Over residues 701–720 (STMMQTKTFSSSSSSKKMGS) the composition is skewed to low complexity. At Ser729 the chain carries Phosphoserine. Over residues 738–750 (LEKRQAEKKKELM) the composition is skewed to basic and acidic residues. Position 792 is a phosphoserine (Ser792). The Calponin-homology (CH) domain occupies 799 to 906 (NSIKQMLLDW…YVQSLYNHLR (108 aa)).

Belongs to the smoothelin family. In terms of tissue distribution, smooth muscle; contractile or vascular (for the long form).

Its subcellular location is the cytoplasm. The protein resides in the cytoskeleton. Functionally, structural protein of the cytoskeleton. The chain is Smoothelin (SMTN) from Homo sapiens (Human).